The primary structure comprises 170 residues: Inosine/xanthosine triphosphatase (170 aa).

It belongs to the YjjX NTPase family. Homodimer. Requires Mg(2+) as cofactor. The cofactor is Mn(2+).

The catalysed reaction is XTP + H2O = XDP + phosphate + H(+). It catalyses the reaction ITP + H2O = IDP + phosphate + H(+). In terms of biological role, phosphatase that hydrolyzes non-canonical purine nucleotides such as XTP and ITP to their respective diphosphate derivatives. Probably excludes non-canonical purines from DNA/RNA precursor pool, thus preventing their incorporation into DNA/RNA and avoiding chromosomal lesions. The sequence is that of Inosine/xanthosine triphosphatase from Aliivibrio fischeri (strain ATCC 700601 / ES114) (Vibrio fischeri).